The primary structure comprises 654 residues: Fructose-1,6-bisphosphatase class 3 (654 aa).

It belongs to the FBPase class 3 family. Mn(2+) is required as a cofactor.

The catalysed reaction is beta-D-fructose 1,6-bisphosphate + H2O = beta-D-fructose 6-phosphate + phosphate. Its pathway is carbohydrate biosynthesis; gluconeogenesis. This chain is Fructose-1,6-bisphosphatase class 3, found in Staphylococcus haemolyticus (strain JCSC1435).